The following is a 361-amino-acid chain: Probable galacturonosyltransferase-like 5 (361 aa).

The Cytoplasmic portion of the chain corresponds to Met-1–Arg-6. Residues Phe-7–Phe-27 form a helical; Signal-anchor for type II membrane protein membrane-spanning segment. Topologically, residues Ser-28–His-361 are lumenal. Residues Asn-218 and Asn-234 are each glycosylated (N-linked (GlcNAc...) asparagine).

It belongs to the glycosyltransferase 8 family.

It localises to the golgi apparatus membrane. It functions in the pathway glycan metabolism; pectin biosynthesis. Functionally, may be involved in pectin and/or xylans biosynthesis in cell walls. The chain is Probable galacturonosyltransferase-like 5 (GATL5) from Arabidopsis thaliana (Mouse-ear cress).